Consider the following 628-residue polypeptide: Chaperone protein DnaK (628 aa).

Threonine 195 is subject to Phosphothreonine; by autocatalysis. The segment at glutamine 545 to glutamate 628 is disordered. Over residues aspartate 555–arginine 591 the composition is skewed to basic and acidic residues. Residues alanine 596–glycine 612 are compositionally biased toward low complexity. The segment covering lysine 614–glutamate 628 has biased composition (basic and acidic residues).

The protein belongs to the heat shock protein 70 family.

Acts as a chaperone. The chain is Chaperone protein DnaK from Deinococcus deserti (strain DSM 17065 / CIP 109153 / LMG 22923 / VCD115).